The primary structure comprises 267 residues: Ribosomal RNA small subunit methyltransferase A (267 aa).

S-adenosyl-L-methionine is bound by residues Asn18, Leu20, Gly45, Glu66, Asp91, and Asn112.

Belongs to the class I-like SAM-binding methyltransferase superfamily. rRNA adenine N(6)-methyltransferase family. RsmA subfamily.

It localises to the cytoplasm. The enzyme catalyses adenosine(1518)/adenosine(1519) in 16S rRNA + 4 S-adenosyl-L-methionine = N(6)-dimethyladenosine(1518)/N(6)-dimethyladenosine(1519) in 16S rRNA + 4 S-adenosyl-L-homocysteine + 4 H(+). Functionally, specifically dimethylates two adjacent adenosines (A1518 and A1519) in the loop of a conserved hairpin near the 3'-end of 16S rRNA in the 30S particle. May play a critical role in biogenesis of 30S subunits. In Shewanella amazonensis (strain ATCC BAA-1098 / SB2B), this protein is Ribosomal RNA small subunit methyltransferase A.